Here is a 439-residue protein sequence, read N- to C-terminus: Tol-Pal system protein TolB (439 aa).

An N-terminal signal peptide occupies residues 1–22 (MTKFPRWLAMLVGLLFPLSALT).

It belongs to the TolB family. The Tol-Pal system is composed of five core proteins: the inner membrane proteins TolA, TolQ and TolR, the periplasmic protein TolB and the outer membrane protein Pal. They form a network linking the inner and outer membranes and the peptidoglycan layer.

Its subcellular location is the periplasm. Its function is as follows. Part of the Tol-Pal system, which plays a role in outer membrane invagination during cell division and is important for maintaining outer membrane integrity. This Xylella fastidiosa (strain Temecula1 / ATCC 700964) protein is Tol-Pal system protein TolB.